A 278-amino-acid chain; its full sequence is 1-acyl-sn-glycerol-3-phosphate acyltransferase beta (278 aa).

The first 23 residues, methionine 1–alanine 23, serve as a signal peptide directing secretion. At alanine 24–lysine 29 the chain is on the lumenal side. The chain crosses the membrane as a helical span at residues valine 30 to leucine 50. Residues arginine 51 to arginine 121 lie on the Cytoplasmic side of the membrane. Residues histidine 98–aspartate 103 carry the HXXXXD motif motif. Residues glutamate 122–asparagine 142 form a helical membrane-spanning segment. At arginine 143–glutamine 278 the chain is on the lumenal side. The EGTR motif motif lies at glutamate 172–arginine 175.

The protein belongs to the 1-acyl-sn-glycerol-3-phosphate acyltransferase family. Expressed predominantly in adipose tissue, pancreas and liver.

The protein localises to the endoplasmic reticulum membrane. The enzyme catalyses a 1-acyl-sn-glycero-3-phosphate + an acyl-CoA = a 1,2-diacyl-sn-glycero-3-phosphate + CoA. It catalyses the reaction 1-(9Z-octadecenoyl)-sn-glycero-3-phosphate + (9Z)-octadecenoyl-CoA = 1,2-di-(9Z-octadecenoyl)-sn-glycero-3-phosphate + CoA. It carries out the reaction 1-(9Z-octadecenoyl)-sn-glycero-3-phosphate + hexadecanoyl-CoA = 1-(9Z)-octadecenoyl-2-hexadecanoyl-sn-glycero-3-phosphate + CoA. The catalysed reaction is heptadecanoyl-CoA + 1-(9Z-octadecenoyl)-sn-glycero-3-phosphate = 1-(9Z)-octadecenoyl-2-heptadecanoyl-sn-glycero-3-phosphate + CoA. The enzyme catalyses 1-(9Z-octadecenoyl)-sn-glycero-3-phosphate + (9Z,12Z)-octadecadienoyl-CoA = 1-(9Z)-octadecenoyl-2-(9Z,12Z)-octadecadienoyl-sn-glycero-3-phosphate + CoA. It catalyses the reaction 1-(9Z-octadecenoyl)-sn-glycero-3-phosphate + tetradecanoyl-CoA = 1-(9Z)-octadecenoyl-2-tetradecanoyl-sn-glycero-3-phosphate + CoA. It carries out the reaction pentadecanoyl-CoA + 1-(9Z-octadecenoyl)-sn-glycero-3-phosphate = 1-(9Z)-octadecenoyl-2-pentadecanoyl-sn-glycero-3-phosphate + CoA. The catalysed reaction is 1-hexadecanoyl-sn-glycero-3-phosphate + (9Z)-octadecenoyl-CoA = 1-hexadecanoyl-2-(9Z-octadecenoyl)-sn-glycero-3-phosphate + CoA. The enzyme catalyses 1-tetradecanoyl-sn-glycerol 3-phosphate + (9Z)-octadecenoyl-CoA = 1-tetradecanoyl-2-(9Z)-octadecenoyl-sn-glycero-3-phosphate + CoA. It catalyses the reaction 1-(9Z,12Z,15Z)-octadecatrienoyl-sn-glycero-3-phosphate + (9Z)-octadecenoyl-CoA = 1-(9Z,12Z,15Z)-octadecatrienoyl-2-(9Z)-octadecenoyl-sn-glycero-3-phosphate + CoA. It carries out the reaction 1-(6Z,9Z,12Z-octadecatrienoyl)-sn-glycero-3-phosphate + (9Z)-octadecenoyl-CoA = (6Z,9Z,12Z)-octadecatrienoyl-2-(9Z)-octadecenoyl-sn-glycero-3-phosphate + CoA. The catalysed reaction is 1-eicosanoyl-sn-glycero-3-phosphate + (9Z)-octadecenoyl-CoA = 1-eicosanoyl-2-(9Z)-octadecenoyl-sn-glycero-3-phosphate + CoA. The enzyme catalyses 1-hexadecanoyl-sn-glycero-3-phosphate + octadecanoyl-CoA = 1-hexadecanoyl-2-octadecanoyl-sn-glycero-3-phosphate + CoA. It catalyses the reaction 1-hexadecanoyl-sn-glycero-3-phosphate + (5Z,8Z,11Z,14Z)-eicosatetraenoyl-CoA = 1-hexadecanoyl-2-(5Z,8Z,11Z,14Z-eicosatetraenoyl)-sn-glycero-3-phosphate + CoA. It carries out the reaction 1-hexadecanoyl-sn-glycero-3-phosphate + hexadecanoyl-CoA = 1,2-dihexadecanoyl-sn-glycero-3-phosphate + CoA. The catalysed reaction is 1-hexadecanoyl-sn-glycero-3-phosphate + tetradecanoyl-CoA = 1-hexadecanoyl-2-tetradecanoyl-sn-glycero-3-phosphate + CoA. The enzyme catalyses (11Z)-octadecenoyl-CoA + 1-(9Z-octadecenoyl)-sn-glycero-3-phosphate = 1-(9Z)-octadecenoyl-2-(11Z)-octadecenoyl-sn-glycero-3-phosphate + CoA. It participates in phospholipid metabolism; CDP-diacylglycerol biosynthesis; CDP-diacylglycerol from sn-glycerol 3-phosphate: step 2/3. In terms of biological role, converts 1-acyl-sn-glycerol-3-phosphate (lysophosphatidic acid or LPA) into 1,2-diacyl-sn-glycerol-3-phosphate (phosphatidic acid or PA) by incorporating an acyl moiety at the sn-2 position of the glycerol backbone. The sequence is that of 1-acyl-sn-glycerol-3-phosphate acyltransferase beta (AGPAT2) from Homo sapiens (Human).